The primary structure comprises 640 residues: Chaperone protein HtpG (640 aa).

The interval 1–348 (MAQYKFETEV…SEDLPLNVSR (348 aa)) is a; substrate-binding. A b region spans residues 349-565 (EILQQNRILS…ETDPSLQMER (217 aa)). Residues 566 to 640 (MMRAMGQFNT…RLNRLMTNLK (75 aa)) form a c region.

Belongs to the heat shock protein 90 family. In terms of assembly, homodimer.

The protein localises to the cytoplasm. Functionally, molecular chaperone. Has ATPase activity. This is Chaperone protein HtpG from Treponema denticola (strain ATCC 35405 / DSM 14222 / CIP 103919 / JCM 8153 / KCTC 15104).